Consider the following 622-residue polypeptide: Apical membrane antigen 1 (622 aa).

The first 24 residues, 1 to 24, serve as a signal peptide directing secretion; the sequence is MRKLYCVLLLSAFEFTYMINFGRG. Topologically, residues 25–546 are extracellular; sequence QNYWEHPYQK…EHKPTYDKMK (522 aa). Cystine bridges form between cysteine 149/cysteine 302, cysteine 217/cysteine 247, cysteine 263/cysteine 275, cysteine 320/cysteine 418, and cysteine 337/cysteine 409. Asparagine 162 carries an N-linked (GlcNAc...) asparagine glycan. Asparagine 286, asparagine 371, asparagine 421, asparagine 422, and asparagine 499 each carry an N-linked (GlcNAc...) asparagine glycan. 3 disulfide bridges follow: cysteine 443/cysteine 502, cysteine 490/cysteine 507, and cysteine 492/cysteine 509. A helical membrane pass occupies residues 547–567; sequence IIIASSAAVAVLATILMVYLY. Over 568–622 the chain is Cytoplasmic; that stretch reads KRKGNAEKYDKMDEPQDYGKSNSRNDEMLDPEASFWGEEKRASHTTPVLMEKPYY. A disordered region spans residues 577–607; it reads DKMDEPQDYGKSNSRNDEMLDPEASFWGEEK.

Belongs to the apicomplexan parasites AMA1 family.

The protein resides in the membrane. Functionally, involved in parasite invasion of erythrocytes. The protein is Apical membrane antigen 1 (AMA-1) of Plasmodium falciparum (isolate 7G8).